Reading from the N-terminus, the 200-residue chain is MNDFTLNAELRSDLGKGASRRLRRLAALVPAVVYGGDKAPESISMLAKEVAKLLENEAAYSHVIELNVGGTKQNVIIKALQRHPAKGHVMHADFVRVVAGQKLTAIVPVHFINEAAPVKKGGEISHVVAEIEVSCLPKDLPEFIEVDLANAEIGTIVHLSDIKAPKGVEFVALAHGDDKAVANVHAPRVAPEATEEGAAE.

This sequence belongs to the bacterial ribosomal protein bL25 family. CTC subfamily. In terms of assembly, part of the 50S ribosomal subunit; part of the 5S rRNA/L5/L18/L25 subcomplex. Contacts the 5S rRNA. Binds to the 5S rRNA independently of L5 and L18.

This is one of the proteins that binds to the 5S RNA in the ribosome where it forms part of the central protuberance. In Pseudomonas fluorescens (strain Pf0-1), this protein is Large ribosomal subunit protein bL25.